A 494-amino-acid chain; its full sequence is Ketol-acid reductoisomerase (NADP(+)) (494 aa).

One can recognise a KARI N-terminal Rossmann domain in the interval 14–208 (LDQLGRCRFM…GGHRAGVLES (195 aa)). NADP(+) is bound by residues 45–48 (CGAQ), R68, R76, S78, and 108–110 (DKQ). The active site involves H132. An NADP(+)-binding site is contributed by G158. KARI C-terminal knotted domains lie at 209 to 344 (SFVA…NYPV) and 345 to 487 (TDVE…MTDM). Positions 217, 221, 389, and 393 each coordinate Mg(2+). S414 is a binding site for substrate.

It belongs to the ketol-acid reductoisomerase family. Requires Mg(2+) as cofactor.

It catalyses the reaction (2R)-2,3-dihydroxy-3-methylbutanoate + NADP(+) = (2S)-2-acetolactate + NADPH + H(+). It carries out the reaction (2R,3R)-2,3-dihydroxy-3-methylpentanoate + NADP(+) = (S)-2-ethyl-2-hydroxy-3-oxobutanoate + NADPH + H(+). It functions in the pathway amino-acid biosynthesis; L-isoleucine biosynthesis; L-isoleucine from 2-oxobutanoate: step 2/4. The protein operates within amino-acid biosynthesis; L-valine biosynthesis; L-valine from pyruvate: step 2/4. Functionally, involved in the biosynthesis of branched-chain amino acids (BCAA). Catalyzes an alkyl-migration followed by a ketol-acid reduction of (S)-2-acetolactate (S2AL) to yield (R)-2,3-dihydroxy-isovalerate. In the isomerase reaction, S2AL is rearranged via a Mg-dependent methyl migration to produce 3-hydroxy-3-methyl-2-ketobutyrate (HMKB). In the reductase reaction, this 2-ketoacid undergoes a metal-dependent reduction by NADPH to yield (R)-2,3-dihydroxy-isovalerate. This chain is Ketol-acid reductoisomerase (NADP(+)), found in Photobacterium profundum (strain SS9).